We begin with the raw amino-acid sequence, 358 residues long: Molybdenum import ATP-binding protein ModC (358 aa).

One can recognise an ABC transporter domain in the interval 3 to 228 (INVKQKLGDL…LEMRPWLPAK (226 aa)). Position 30-37 (30-37 (GRSGAGKT)) interacts with ATP. The Mop domain maps to 289 to 356 (QTSIRNVLLA…IKGVSVTKDD (68 aa)).

This sequence belongs to the ABC transporter superfamily. Molybdate importer (TC 3.A.1.8) family. The complex is composed of two ATP-binding proteins (ModC), two transmembrane proteins (ModB) and a solute-binding protein (ModA).

It is found in the cell inner membrane. It catalyses the reaction molybdate(out) + ATP + H2O = molybdate(in) + ADP + phosphate + H(+). Functionally, part of the ABC transporter complex ModABC involved in molybdenum import. Responsible for energy coupling to the transport system. This is Molybdenum import ATP-binding protein ModC from Photobacterium profundum (strain SS9).